The sequence spans 1766 residues: DNA-directed RNA polymerase II subunit RPB1-A (1766 aa).

Positions 69, 72, 79, and 82 each coordinate Zn(2+). Residues Asp-487, Asp-489, and Asp-491 each coordinate Mg(2+). The interval 813-825 is bridging helix; that stretch reads PHEFFFHTMAGRE. Residues 1660-1766 form a disordered region; it reads HAMSSAAPPS…EFGDEEEEEQ (107 aa). Positions 1706-1716 are enriched in basic and acidic residues; the sequence is RGDEPSTHRSD. The segment covering 1742-1756 has biased composition (low complexity); sequence PTAKTPQQAAPPTAA.

Belongs to the RNA polymerase beta' chain family. In terms of assembly, component of the RNA polymerase II (Pol II) complex consisting of 12 subunits.

The protein resides in the nucleus. It carries out the reaction RNA(n) + a ribonucleoside 5'-triphosphate = RNA(n+1) + diphosphate. In terms of biological role, DNA-dependent RNA polymerase catalyzes the transcription of DNA into RNA using the four ribonucleoside triphosphates as substrates. Largest and catalytic component of RNA polymerase II which synthesizes mRNA precursors and many functional non-coding RNAs. Forms the polymerase active center together with the second largest subunit. Pol II is the central component of the basal RNA polymerase II transcription machinery. It is composed of mobile elements that move relative to each other. RPB1 is part of the core element with the central large cleft, the clamp element that moves to open and close the cleft and the jaws that are thought to grab the incoming DNA template. At the start of transcription, a single-stranded DNA template strand of the promoter is positioned within the central active site cleft of Pol II. A bridging helix emanates from RPB1 and crosses the cleft near the catalytic site and is thought to promote translocation of Pol II by acting as a ratchet that moves the RNA-DNA hybrid through the active site by switching from straight to bent conformations at each step of nucleotide addition. During transcription elongation, Pol II moves on the template as the transcript elongates. The protein is DNA-directed RNA polymerase II subunit RPB1-A (TRP4.8) of Trypanosoma brucei brucei.